The primary structure comprises 234 residues: Small ribosomal subunit protein uS3 (234 aa).

One can recognise a KH type-2 domain in the interval 17-86; that stretch reads VEKFLTKELK…SPQVEVQQVQ (70 aa).

Belongs to the universal ribosomal protein uS3 family. Part of the 30S ribosomal subunit.

Binds the lower part of the 30S subunit head. This chain is Small ribosomal subunit protein uS3, found in Methanoculleus marisnigri (strain ATCC 35101 / DSM 1498 / JR1).